Reading from the N-terminus, the 559-residue chain is Mercuric reductase (559 aa).

Positions 1 to 64 (MYLNITGMTC…AVAGLGYKAT (64 aa)) constitute an HMA domain. A metal cation contacts are provided by cysteine 10 and cysteine 13. FAD-binding residues include alanine 108, glycine 128, and threonine 133. A disulfide bond links cysteine 134 and cysteine 139. Residues lysine 143, alanine 209, aspartate 401, and valine 409 each contribute to the FAD site. Cysteine 556 and cysteine 557 together coordinate Hg(2+).

This sequence belongs to the class-I pyridine nucleotide-disulfide oxidoreductase family. In terms of assembly, homodimer. The cofactor is FAD.

The enzyme catalyses Hg + NADP(+) + H(+) = Hg(2+) + NADPH. Functionally, resistance to Hg(2+) in bacteria appears to be governed by a specialized system which includes mercuric reductase. MerA protein is responsible for volatilizing mercury as Hg(0). In Alcaligenes sp, this protein is Mercuric reductase (merA).